Consider the following 1176-residue polypeptide: Pesticidal crystal protein Cry1Cb (1176 aa).

Belongs to the delta endotoxin family.

In terms of biological role, promotes colloidosmotic lysis by binding to the midgut epithelial cells of insects. Toxic to Spodoptera exigua and Trichoplusia ni. The chain is Pesticidal crystal protein Cry1Cb (cry1Cb) from Bacillus thuringiensis subsp. galleriae.